Consider the following 189-residue polypeptide: Bilin-binding protein (189 aa).

A signal peptide spans 1-15 (MQYLIVLALVAAASA). Intrachain disulfides connect Cys23-Cys130 and Cys57-Cys185.

Belongs to the calycin superfamily. Lipocalin family. Homotetramer. In terms of tissue distribution, hemolymph.

It localises to the secreted. Its function is as follows. This protein binds the blue pigments bilins. This chain is Bilin-binding protein, found in Pieris brassicae (White butterfly).